The sequence spans 630 residues: tRNA uridine 5-carboxymethylaminomethyl modification enzyme MnmG (630 aa).

An FAD-binding site is contributed by 13 to 18; it reads GGGHAG. 273 to 287 is an NAD(+) binding site; sequence GPRYCPSIEDKIHRF.

This sequence belongs to the MnmG family. As to quaternary structure, homodimer. Heterotetramer of two MnmE and two MnmG subunits. Requires FAD as cofactor.

The protein localises to the cytoplasm. In terms of biological role, NAD-binding protein involved in the addition of a carboxymethylaminomethyl (cmnm) group at the wobble position (U34) of certain tRNAs, forming tRNA-cmnm(5)s(2)U34. This is tRNA uridine 5-carboxymethylaminomethyl modification enzyme MnmG from Pseudomonas aeruginosa (strain LESB58).